Reading from the N-terminus, the 343-residue chain is Protein RecA (343 aa).

66 to 73 provides a ligand contact to ATP; sequence GPESSGKT.

The protein belongs to the RecA family.

It is found in the cytoplasm. In terms of biological role, can catalyze the hydrolysis of ATP in the presence of single-stranded DNA, the ATP-dependent uptake of single-stranded DNA by duplex DNA, and the ATP-dependent hybridization of homologous single-stranded DNAs. It interacts with LexA causing its activation and leading to its autocatalytic cleavage. The protein is Protein RecA of Rickettsia conorii (strain ATCC VR-613 / Malish 7).